We begin with the raw amino-acid sequence, 207 residues long: A disintegrin and metalloproteinase with thrombospondin motifs 5 (207 aa).

The 74-residue stretch at 1 to 74 (HAAFTVAHEI…GHGNCLLDLP (74 aa)) folds into the Peptidase M12B domain. Residue His8 participates in Zn(2+) binding. Residue Glu9 is part of the active site. Zn(2+) is bound by residues His12 and His18. 5 cysteine pairs are disulfide-bonded: Cys24–Cys53, Cys95–Cys117, Cys106–Cys127, Cys112–Cys146, and Cys140–Cys151. The Disintegrin domain maps to 83 to 164 (ELPGQTYDAS…TKKKYYSTSS (82 aa)). N-linked (GlcNAc...) asparagine glycosylation is present at Asn96. The TSP type-1 domain maps to 165-205 (HGNWGSWGSWGQCSRSCGGGVQFAYRHCNNPAPKNNGRYCT). Trp168 and Trp171 each carry a C-linked (Man) tryptophan glycan. O-linked (Fuc...) serine glycosylation is present at Ser180.

The cofactor is Zn(2+). Post-translationally, the precursor is cleaved by furin and PCSK7 outside of the cell. Glycosylated. Can be O-fucosylated by POFUT2 on a serine or a threonine residue found within the consensus sequence C1-X(2)-(S/T)-C2-G of the TSP type-1 repeat domains where C1 and C2 are the first and second cysteine residue of the repeat, respectively. Fucosylated repeats can then be further glycosylated by the addition of a beta-1,3-glucose residue by the glucosyltransferase, B3GALTL. Fucosylation mediates the efficient secretion of ADAMTS family members. Can also be C-glycosylated with one or two mannose molecules on tryptophan residues within the consensus sequence W-X-X-W of the TPRs, and N-glycosylated. These other glycosylations can also facilitate secretion.

It localises to the secreted. The protein localises to the extracellular space. The protein resides in the extracellular matrix. In terms of biological role, metalloproteinase that plays an important role in connective tissue organization, development, inflammation and cell migration. Extracellular matrix (ECM) degrading enzyme that shows proteolytic activity toward the hyalectan group of chondroitin sulfate proteoglycans (CSPGs) including ACAN, VCAN, BCAN and NCAN. Cleavage within the hyalectans occurs at Glu-Xaa recognition motifs. Plays a role in embryonic development, including limb and cardiac morphogenesis, and skeletal muscle development through its VCAN remodeling properties. Cleaves VCAN in the pericellular matrix surrounding myoblasts, facilitating myoblast contact and fusion which is required for skeletal muscle development and regeneration. Participates in the development of brown adipose tissue and browning of white adipose tissue. Plays an important role for T-lymphocyte migration from draining lymph nodes following viral infection. This Bos taurus (Bovine) protein is A disintegrin and metalloproteinase with thrombospondin motifs 5 (ADAMTS5).